Here is a 78-residue protein sequence, read N- to C-terminus: Putative protein PeaD (78 aa).

Belongs to the phage P protein family.

In Escherichia coli (strain K12), this protein is Putative protein PeaD (peaD).